We begin with the raw amino-acid sequence, 1454 residues long: ABC transporter G family member 43 (1454 aa).

Residues 23–47 (ARSLRDGDDPFRRSAAASRRDAGDD) are disordered. The span at 25–44 (SLRDGDDPFRRSAAASRRDA) shows a compositional bias: basic and acidic residues. Residue asparagine 163 is glycosylated (N-linked (GlcNAc...) asparagine). One can recognise an ABC transporter 1 domain in the interval 170–444 (EGLVSLFISS…FESAGFRCPE (275 aa)). 204 to 211 (GPPSSGKS) is a binding site for ATP. N-linked (GlcNAc...) asparagine glycosylation occurs at asparagine 393. The ABC transmembrane type-2 1 domain maps to 524 to 735 (LKAVMSREWL…SNNALSVNEF (212 aa)). 6 helical membrane-spanning segments follow: residues 540–560 (FLFI…MTLF), 577–597 (VGAL…ELQL), 613–630 (FFPA…KVPL), 637–656 (LWIV…GRFF), 659–679 (FLAY…LGAI), and 684–704 (VVAN…GGFL). N-linked (GlcNAc...) asparagine glycosylation is present at asparagine 745. The chain crosses the membrane as a helical span at residues 775 to 795 (IGAMIGFMIVFNILYLCALTF). The tract at residues 804–823 (TVVSDDDTKSELEAESNQEQ) is disordered. N-linked (GlcNAc...) asparagine glycosylation is found at asparagine 829 and asparagine 832. One can recognise an ABC transporter 2 domain in the interval 852–1104 (LSFNHMNYYV…ILVEYFEAIP (253 aa)). 897–904 (GVSGAGKT) is a binding site for ATP. A glycan (N-linked (GlcNAc...) asparagine) is linked at asparagine 951. Residues 1178-1391 (QCVANTWKQF…TIYGVIASQF (214 aa)) enclose the ABC transmembrane type-2 2 domain. 7 helical membrane passes run 1196–1216 (YNAM…TVFW), 1236–1256 (YAAV…VVSV), 1284–1304 (FCYS…MIGY), 1314–1334 (FLFF…MLVA), 1341–1361 (LAAV…GFII), 1372–1392 (WFYW…SQFA), and 1423–1443 (FLGY…FLFG).

This sequence belongs to the ABC transporter superfamily. ABCG family. PDR (TC 3.A.1.205) subfamily. As to expression, specifically expressed in the vasculature of roots, stems, panicles, sheaths and leaves.

It localises to the cell membrane. ABC transporter modulating cadmium (Cd) import, thus controlling Cd(2+) accumulation to prevent phytotoxicity. Confers high tolerance to Cd in yeast. Prevents leaf bacteria proliferation, such as Xanthomonas oryzae pv. oryzicola (Xoc) RS105 and X.oryzae pv. oryzae (Xoo) PXO99, by triggering Cd accumulation, which in turn impairs bacterial virulence factors. In Oryza sativa subsp. japonica (Rice), this protein is ABC transporter G family member 43.